A 370-amino-acid polypeptide reads, in one-letter code: Flagellar P-ring protein (370 aa).

An N-terminal signal peptide occupies residues 1–28 (MTFFTRCFRRGALLFLLAVLLLPSPAQA).

Belongs to the FlgI family. In terms of assembly, the basal body constitutes a major portion of the flagellar organelle and consists of four rings (L,P,S, and M) mounted on a central rod.

The protein localises to the periplasm. Its subcellular location is the bacterial flagellum basal body. In terms of biological role, assembles around the rod to form the L-ring and probably protects the motor/basal body from shearing forces during rotation. This chain is Flagellar P-ring protein, found in Oleidesulfovibrio alaskensis (strain ATCC BAA-1058 / DSM 17464 / G20) (Desulfovibrio alaskensis).